The chain runs to 83 residues: Small ribosomal subunit protein uS17c (83 aa).

It belongs to the universal ribosomal protein uS17 family. In terms of assembly, part of the 30S ribosomal subunit.

The protein resides in the plastid. It localises to the chloroplast. One of the primary rRNA binding proteins, it binds specifically to the 5'-end of 16S ribosomal RNA. This chain is Small ribosomal subunit protein uS17c (rps17), found in Pyropia yezoensis (Susabi-nori).